The sequence spans 568 residues: 4-hydroxy-7-methoxy-3-oxo-3,4-dihydro-2H-1,4-benzoxazin-2-yl glucoside beta-D-glucosidase, chloroplastic (568 aa).

The N-terminal 50 residues, 1-50 (MALLVGGTLNPTTHLSLRSRAGRNSENVWLRSAASSQTSKGRFCNLTVRA), are a transit peptide targeting the chloroplast. A beta-D-glucoside is bound by residues Q92, H194, and 239–240 (NE). The active-site Proton donor is E240. A disulfide bridge links C259 with C265. A beta-D-glucoside contacts are provided by residues Y383, E456, W504, 511–512 (EW), and F520. The active-site Nucleophile is E456.

The protein belongs to the glycosyl hydrolase 1 family. In terms of assembly, homohexamer. Expressed in seedlings, mesocotyl, coleoptile, leaf sheath, and roots.

It localises to the plastid. It is found in the chloroplast. The enzyme catalyses DIMBOA beta-D-glucoside + H2O = DIMBOA + D-glucose. The catalysed reaction is DIBOA beta-D-glucoside + H2O = DIBOA + D-glucose. It carries out the reaction Hydrolysis of terminal, non-reducing beta-D-glucosyl residues with release of beta-D-glucose.. With respect to regulation, inhibited by castanospermine, Ag(+) and Cu(2+). 34% inhibition by Zn(2+) and not affected by EDTA. Involved in defense of young plant parts against pests via the production of benzoxazolinones (hydroxamic acids) from hydroxamic acid glucosides. The preferred substrate is DIBOA-beta-D-glucoside. Can also use esculin and genistein glucoside as substrates, but no activity with salicin, p-nitrophenyl-alpha-glucoside or substrates related to cell wall components. This chain is 4-hydroxy-7-methoxy-3-oxo-3,4-dihydro-2H-1,4-benzoxazin-2-yl glucoside beta-D-glucosidase, chloroplastic, found in Secale cereale (Rye).